Reading from the N-terminus, the 564-residue chain is 60 kDa lysophospholipase (564 aa).

The Asparaginase/glutaminase domain maps to 9–355 (RRLLAIYTGG…NDRKKLLAKD (347 aa)). The active-site Acyl-ester intermediate is threonine 19. Residues 41 to 350 (TLHMFHDEEY…PGLSLNDRKK (310 aa)) are asparaginase. Substrate-binding positions include 84 to 86 (DSS) and 116 to 117 (TD). ANK repeat units follow at residues 141–170 (GAQV…YVIP), 396–426 (VLLP…DLNL), 430–459 (SGQT…DVDA), 463–492 (DGQS…RLSP), and 530–559 (DGHC…SVCA). Serine 478 carries the post-translational modification Phosphoserine.

This sequence in the N-terminal section; belongs to the asparaginase 1 family. Monomer.

It catalyses the reaction a 1-acyl-sn-glycero-3-phosphocholine + H2O = sn-glycerol 3-phosphocholine + a fatty acid + H(+). The catalysed reaction is L-asparagine + H2O = L-aspartate + NH4(+). It carries out the reaction a 1-O-alkyl-2-acetyl-sn-glycero-3-phosphocholine + H2O = a 1-O-alkyl-sn-glycero-3-phosphocholine + acetate + H(+). The enzyme catalyses 1-hexadecanoyl-sn-glycero-3-phosphocholine + H2O = sn-glycerol 3-phosphocholine + hexadecanoate + H(+). It catalyses the reaction 2 1-hexadecanoyl-sn-glycero-3-phosphocholine = 1,2-dihexadecanoyl-sn-glycero-3-phosphocholine + sn-glycerol 3-phosphocholine. The catalysed reaction is 1-octadecanoyl-sn-glycero-3-phosphocholine + H2O = octadecanoate + sn-glycerol 3-phosphocholine + H(+). It carries out the reaction 1-(9Z-octadecenoyl)-sn-glycero-3-phosphocholine + H2O = sn-glycerol 3-phosphocholine + (9Z)-octadecenoate + H(+). The enzyme catalyses 1-hexadecanoyl-sn-glycero-3-phosphoethanolamine + H2O = sn-glycero-3-phosphoethanolamine + hexadecanoate + H(+). It catalyses the reaction 1-(9Z-octadecenoyl)-sn-glycero-3-phosphoethanolamine + H2O = sn-glycero-3-phosphoethanolamine + (9Z)-octadecenoate + H(+). The catalysed reaction is 1-hexadecanoyl-sn-glycero-3-phosphoethanolamine + 1-hexadecanoyl-sn-glycero-3-phosphocholine = 1,2-dihexadecanoyl-sn-glycero-3-phosphoethanolamine + sn-glycerol 3-phosphocholine. It carries out the reaction 2-(5Z,8Z,11Z,14Z)-eicosatetraenoyl-sn-glycero-3-phosphocholine + H2O = sn-glycerol 3-phosphocholine + (5Z,8Z,11Z,14Z)-eicosatetraenoate + H(+). The enzyme catalyses 2-hexadecanoyl-sn-glycero-3-phosphocholine + H2O = sn-glycerol 3-phosphocholine + hexadecanoate + H(+). It catalyses the reaction 2 2-hexadecanoyl-sn-glycero-3-phosphocholine = 1,2-dihexadecanoyl-sn-glycero-3-phosphocholine + sn-glycerol 3-phosphocholine. The catalysed reaction is 1-O-(9Z)-octadecenoyl-2-O-acetyl-sn-glycero-3-phosphocholine + H2O = 2-acetyl-sn-glycero-3-phosphocholine + (9Z)-octadecenoate + H(+). It carries out the reaction a 1-acyl-sn-glycero-3-phospho-(1D-myo-inositol) + 1-hexadecanoyl-sn-glycero-3-phosphocholine = a 1-acyl-2-hexadecanoyl-sn-glycero-3-phospho-(1D-myo-inositol) + sn-glycerol 3-phosphocholine. The enzyme catalyses 2 2-(5Z,8Z,11Z,14Z)-eicosatetraenoyl-sn-glycero-3-phosphocholine = 1,2-di-(5Z,8Z,11Z,14Z-eicosatetraenoyl)-sn-glycero-3-phosphocholine + sn-glycerol 3-phosphocholine. Its function is as follows. Exhibits lysophospholipase, transacylase, PAF acetylhydrolase and asparaginase activities. Can catalyze three types of transacylation reactions: (1) acyl transfer from 1-acyl-sn-glycero-3-phosphocholine (1-acyl-GPC) to the sn-1(3) positions of glycerol and 2-acylglycerol (sn-1 to -1(3) transfer), (2) acyl transfer from 1-acyl-GPC to the sn-2 positions of 1-acyl-GPC, 1-acyl-sn-glycero-3-phosphoethanolamine (1-acyl-GPE), and other lysophospholipids (sn-1 to -2 transfer) and (3) acyl transfer from 2-acyl-GPC to the sn-1 position of 2-acyl-GPC and 2-acyl-GPE (sn-2 to -1 transfer). Mediates the synthesis of 1-arachidonoyl species of phospholipids by transferring the arachidonoyl residue from 2-arachidonoyl lysophospholipid to the sn-1 position of 2-acyl lysophospholipid. In Mus musculus (Mouse), this protein is 60 kDa lysophospholipase (Aspg).